Here is a 309-residue protein sequence, read N- to C-terminus: Pantoate--beta-alanine ligase (309 aa).

Belongs to the pantothenate synthetase family.

Its subcellular location is the cytoplasm. The protein localises to the nucleus. The catalysed reaction is (R)-pantoate + beta-alanine + ATP = (R)-pantothenate + AMP + diphosphate + H(+). Its pathway is cofactor biosynthesis; (R)-pantothenate biosynthesis; (R)-pantothenate from (R)-pantoate and beta-alanine: step 1/1. Required for pantothenic acid biosynthesis. In Saccharomyces cerevisiae (strain ATCC 204508 / S288c) (Baker's yeast), this protein is Pantoate--beta-alanine ligase (PAN6).